A 261-amino-acid polypeptide reads, in one-letter code: uncharacterized protein (261 aa).

Belongs to the FrhB family.

This is an uncharacterized protein from Methanocaldococcus jannaschii (strain ATCC 43067 / DSM 2661 / JAL-1 / JCM 10045 / NBRC 100440) (Methanococcus jannaschii).